The primary structure comprises 443 residues: 23S rRNA (uracil(1939)-C(5))-methyltransferase RlmD (443 aa).

Residues 4–66 (QNRFDRTSFQ…RHFDEARVVE (63 aa)) form the TRAM domain. The [4Fe-4S] cluster site is built by Cys79, Cys85, Cys88, and Cys167. Positions 275, 304, 309, 325, 352, and 373 each coordinate S-adenosyl-L-methionine. Catalysis depends on Cys399, which acts as the Nucleophile.

It belongs to the class I-like SAM-binding methyltransferase superfamily. RNA M5U methyltransferase family. RlmD subfamily.

The enzyme catalyses uridine(1939) in 23S rRNA + S-adenosyl-L-methionine = 5-methyluridine(1939) in 23S rRNA + S-adenosyl-L-homocysteine + H(+). Its function is as follows. Catalyzes the formation of 5-methyl-uridine at position 1939 (m5U1939) in 23S rRNA. This chain is 23S rRNA (uracil(1939)-C(5))-methyltransferase RlmD, found in Xylella fastidiosa (strain Temecula1 / ATCC 700964).